The following is a 357-amino-acid chain: Serine protease 1 (357 aa).

The signal sequence occupies residues 1 to 29 (MRRTTRARTGLSALLLAASLGLGAAPAGA). The propeptide occupies 30–170 (DAPQRPAPTP…TRVPGVFQRE (141 aa)). Residues Cys-184 and Cys-204 are joined by a disulfide bond. Residues His-203, Asp-232, and Ser-313 each act as charge relay system in the active site. Cys-307 and Cys-333 form a disulfide bridge.

Belongs to the peptidase S1 family.

It localises to the secreted. Functionally, serine protease that preferentially cleaves peptide bonds on the C-terminal side of aspartate and glutamate with a 10-fold higher reactivity for a glutamyl bond than an aspartyl bond. In Streptomyces fradiae (Streptomyces roseoflavus), this protein is Serine protease 1.